A 909-amino-acid polypeptide reads, in one-letter code: Protein translocase subunit SecA (909 aa).

Residues Q87, G105 to T109, and D512 each bind ATP. Residues L863–S909 form a disordered region. Positions M880 to R889 are enriched in basic and acidic residues. Zn(2+) contacts are provided by C893, C895, C904, and H905. Residues R899–S909 show a composition bias toward basic residues.

Belongs to the SecA family. Monomer and homodimer. Part of the essential Sec protein translocation apparatus which comprises SecA, SecYEG and auxiliary proteins SecDF-YajC and YidC. Zn(2+) serves as cofactor.

It localises to the cell inner membrane. The protein localises to the cytoplasm. It catalyses the reaction ATP + H2O + cellular proteinSide 1 = ADP + phosphate + cellular proteinSide 2.. Part of the Sec protein translocase complex. Interacts with the SecYEG preprotein conducting channel. Has a central role in coupling the hydrolysis of ATP to the transfer of proteins into and across the cell membrane, serving both as a receptor for the preprotein-SecB complex and as an ATP-driven molecular motor driving the stepwise translocation of polypeptide chains across the membrane. The polypeptide is Protein translocase subunit SecA (Shewanella putrefaciens (strain CN-32 / ATCC BAA-453)).